A 444-amino-acid chain; its full sequence is N-succinylarginine dihydrolase (444 aa).

Residues 19 to 28 (AGLSFGNVAS), asparagine 110, and 137 to 138 (HR) contribute to the substrate site. The active site involves glutamate 174. Arginine 214 is a binding site for substrate. The active site involves histidine 250. Residues aspartate 252 and asparagine 362 each contribute to the substrate site. Cysteine 368 serves as the catalytic Nucleophile.

Belongs to the succinylarginine dihydrolase family. In terms of assembly, homodimer.

The catalysed reaction is N(2)-succinyl-L-arginine + 2 H2O + 2 H(+) = N(2)-succinyl-L-ornithine + 2 NH4(+) + CO2. Its pathway is amino-acid degradation; L-arginine degradation via AST pathway; L-glutamate and succinate from L-arginine: step 2/5. Its function is as follows. Catalyzes the hydrolysis of N(2)-succinylarginine into N(2)-succinylornithine, ammonia and CO(2). The chain is N-succinylarginine dihydrolase from Shewanella frigidimarina (strain NCIMB 400).